Reading from the N-terminus, the 85-residue chain is Small ribosomal subunit protein uS17 (85 aa).

This sequence belongs to the universal ribosomal protein uS17 family. In terms of assembly, part of the 30S ribosomal subunit.

Its function is as follows. One of the primary rRNA binding proteins, it binds specifically to the 5'-end of 16S ribosomal RNA. The sequence is that of Small ribosomal subunit protein uS17 from Haemophilus influenzae (strain 86-028NP).